The sequence spans 932 residues: MTNCLSFRNGRGLALLCALLGTLCETGSGQIRYSVSEELDKGSFVGNIANDLGLEPRELAERGVRIVSRGRTQLFSLNPQSGSLVTAERIDREELCAQIPLCLVKINILVEDKLKIFEVEIEIKDINDNAPNFPTEELEIKIGELTVPGTRFPIKTAFDPDVGINSLQNYKLSPNDYFSLAVNSVSEGAKYPELVLERALDREKKEIHQLVLVASDGGDPVHSGNLHIQVIVLDANDNPPMFTQPEYRVSVWENVPVGTRLLTVNATDPDEGFNAQVSYILDKMPGKIAEIFHLNSVSGEVSILKSLDYEDAMFYEIKIEAQDGPGLLSRAKILVTVLDVNDNAPEITITSLTSSVPEEGTVGREIALIDVHDRDSGQNGQVEVFVLGNLPFKLEKSIDQYYRLVTATSLDREQISEYNISLRASDGGSPPLSTETHITLHVIDINDNPPTFPHLSYSAYIPENNPRGASIFSVTAQDPDSNNNARITYALTEDTLQGAPLSSFVSINSNTGVLYALRSFDYEQFRDLKLLVTASDSGNPPLSSNVSLNLFVLDQNDNAPEILYPALPTDGSTGVELAPRSAEPGYLVTKVVAVDRDSGQNAWLSYRLLKASEPGLFSVGLHTGEVRTARALLDRDALKQSLVVAVQDHGQPPLSATVTLTVAVADRIPDILADLGSLEPSAKPNDSDLTLYLVVAVAAVSCVFLAFVIVLLALRLRRWHKSRLLQASGGGLASTPGSHFVGADGVRAFLQTYSHEVSLTADSRKSHLIFPQPNYADTLISQESCEKSEPLLITQDLLEMKGDSNLLQQAPPNTDWRFSQAQRPGTSGSQNGDDTGTWPNNQFDTEMLQAMILASASEAADGSSTLGGGAGTMGLSARYGPQFTLQHVPDYRQNVYIPGSNATLTNAAGKRDGKAPAGGNGNKKKSGKKEKK.

An N-terminal signal peptide occupies residues 1 to 29; that stretch reads MTNCLSFRNGRGLALLCALLGTLCETGSG. Cadherin domains lie at 30–133, 134–242, 243–347, 348–452, 453–562, and 570–682; these read QIRY…APNF, PTEE…PPMF, TQPE…APEI, TITS…PPTF, PHLS…APEI, and DGST…EPSA. Residues 30–692 are Extracellular-facing; it reads QIRYSVSEEL…KPNDSDLTLY (663 aa). 3 N-linked (GlcNAc...) asparagine glycosylation sites follow: Asn-265, Asn-419, and Asn-545. N-linked (GlcNAc...) asparagine glycosylation occurs at Asn-685. A helical transmembrane segment spans residues 693–713; it reads LVVAVAAVSCVFLAFVIVLLA. At 714-932 the chain is on the cytoplasmic side; sequence LRLRRWHKSR…KKKSGKKEKK (219 aa). 2 disordered regions span residues 805–841 and 902–932; these read NLLQ…WPNN and ATLT…KEKK. Positions 922 to 932 are enriched in basic residues; sequence NKKKSGKKEKK.

It is found in the cell membrane. Potential calcium-dependent cell-adhesion protein. May be involved in the establishment and maintenance of specific neuronal connections in the brain. The polypeptide is Protocadherin gamma-A3 (PCDHGA3) (Homo sapiens (Human)).